The following is a 574-amino-acid chain: Sulfate adenylyltransferase (574 aa).

The segment at 1–169 (MANPPHGGVL…IEAINKLNHY (169 aa)) is N-terminal. The tract at residues 170-394 (DYVALRYTPA…LRESSPPRHT (225 aa)) is catalytic. Residue Q197 coordinates sulfate. Residues 197-200 (QTRN) and 291-294 (GRDH) contribute to the ATP site. Residues T198, R199, and N200 contribute to the active site. R199 serves as a coordination point for sulfate. A295 contacts sulfate. Position 333 (V333) interacts with ATP. The interval 395-574 (QGFTIFLTGY…LETEGFFDRS (180 aa)) is allosteric regulation domain; adenylyl-sulfate kinase-like. Residues 434-437 (DTVR), R451, 477-478 (IA), and R516 contribute to the 3'-phosphoadenylyl sulfate site.

This sequence in the N-terminal section; belongs to the sulfate adenylyltransferase family. The protein in the C-terminal section; belongs to the APS kinase family. In terms of assembly, homohexamer. Dimer of trimers.

Its subcellular location is the cytoplasm. The enzyme catalyses sulfate + ATP + H(+) = adenosine 5'-phosphosulfate + diphosphate. It functions in the pathway sulfur metabolism; hydrogen sulfide biosynthesis; sulfite from sulfate: step 1/3. Its activity is regulated as follows. Allosterically inhibited by 3'-phosphoadenosine 5'-phosphosulfate (PAPS). Functionally, catalyzes the first intracellular reaction of sulfate assimilation, forming adenosine-5'-phosphosulfate (APS) from inorganic sulfate and ATP. Plays an important role in sulfate activation as a component of the biosynthesis pathway of sulfur-containing amino acids. In Neosartorya fischeri (strain ATCC 1020 / DSM 3700 / CBS 544.65 / FGSC A1164 / JCM 1740 / NRRL 181 / WB 181) (Aspergillus fischerianus), this protein is Sulfate adenylyltransferase.